Reading from the N-terminus, the 67-residue chain is DNA-directed RNA polymerase subunit omega (67 aa).

Belongs to the RNA polymerase subunit omega family. The RNAP catalytic core consists of 2 alpha, 1 beta, 1 beta' and 1 omega subunit. When a sigma factor is associated with the core the holoenzyme is formed, which can initiate transcription.

It catalyses the reaction RNA(n) + a ribonucleoside 5'-triphosphate = RNA(n+1) + diphosphate. Functionally, promotes RNA polymerase assembly. Latches the N- and C-terminal regions of the beta' subunit thereby facilitating its interaction with the beta and alpha subunits. The sequence is that of DNA-directed RNA polymerase subunit omega from Nitrosomonas eutropha (strain DSM 101675 / C91 / Nm57).